The sequence spans 441 residues: Proline--tRNA ligase (441 aa).

Belongs to the class-II aminoacyl-tRNA synthetase family. ProS type 2 subfamily. As to quaternary structure, homodimer.

The protein localises to the cytoplasm. The catalysed reaction is tRNA(Pro) + L-proline + ATP = L-prolyl-tRNA(Pro) + AMP + diphosphate. Its function is as follows. Catalyzes the attachment of proline to tRNA(Pro) in a two-step reaction: proline is first activated by ATP to form Pro-AMP and then transferred to the acceptor end of tRNA(Pro). This chain is Proline--tRNA ligase, found in Bartonella henselae (strain ATCC 49882 / DSM 28221 / CCUG 30454 / Houston 1) (Rochalimaea henselae).